Consider the following 374-residue polypeptide: Anhydro-N-acetylmuramic acid kinase (374 aa).

An ATP-binding site is contributed by G15–D22.

Belongs to the anhydro-N-acetylmuramic acid kinase family.

The catalysed reaction is 1,6-anhydro-N-acetyl-beta-muramate + ATP + H2O = N-acetyl-D-muramate 6-phosphate + ADP + H(+). It functions in the pathway amino-sugar metabolism; 1,6-anhydro-N-acetylmuramate degradation. The protein operates within cell wall biogenesis; peptidoglycan recycling. Functionally, catalyzes the specific phosphorylation of 1,6-anhydro-N-acetylmuramic acid (anhMurNAc) with the simultaneous cleavage of the 1,6-anhydro ring, generating MurNAc-6-P. Is required for the utilization of anhMurNAc either imported from the medium or derived from its own cell wall murein, and thus plays a role in cell wall recycling. This chain is Anhydro-N-acetylmuramic acid kinase, found in Xanthomonas axonopodis pv. citri (strain 306).